A 56-amino-acid polypeptide reads, in one-letter code: MRFHVLLTVALLLTSLMSIEAKPVNGAEMERDSAIESCFVSCTYCAYNCGTPSSVD.

The signal sequence occupies residues 1–21 (MRFHVLLTVALLLTSLMSIEA). Positions 22-30 (KPVNGAEME) are excised as a propeptide.

Contains 2 disulfide bonds. Expressed by the venom duct.

It is found in the secreted. The chain is Turripeptide XIV-01 from Gemmula speciosa (Splendid gem-turris).